We begin with the raw amino-acid sequence, 164 residues long: Phosphopantetheine adenylyltransferase (164 aa).

Ser-9 contacts substrate. Residues 9–10 (SF) and His-17 each bind ATP. Residues Lys-41, Leu-74, and Arg-88 each contribute to the substrate site. ATP-binding positions include 89-91 (GIR), Glu-99, and 124-130 (YAEVSST).

It belongs to the bacterial CoaD family. In terms of assembly, homohexamer. Requires Mg(2+) as cofactor.

It localises to the cytoplasm. It carries out the reaction (R)-4'-phosphopantetheine + ATP + H(+) = 3'-dephospho-CoA + diphosphate. It participates in cofactor biosynthesis; coenzyme A biosynthesis; CoA from (R)-pantothenate: step 4/5. Reversibly transfers an adenylyl group from ATP to 4'-phosphopantetheine, yielding dephospho-CoA (dPCoA) and pyrophosphate. This chain is Phosphopantetheine adenylyltransferase, found in Chromobacterium violaceum (strain ATCC 12472 / DSM 30191 / JCM 1249 / CCUG 213 / NBRC 12614 / NCIMB 9131 / NCTC 9757 / MK).